The sequence spans 191 residues: FMN reductase (NADH) RutF (191 aa).

The protein belongs to the non-flavoprotein flavin reductase family. RutF subfamily.

The enzyme catalyses FMNH2 + NAD(+) = FMN + NADH + 2 H(+). Its function is as follows. Catalyzes the reduction of FMN to FMNH2 which is used to reduce pyrimidine by RutA via the Rut pathway. The sequence is that of FMN reductase (NADH) RutF from Escherichia coli O1:K1 / APEC.